Here is a 73-residue protein sequence, read N- to C-terminus: Translation initiation factor IF-1 (73 aa).

In terms of domain architecture, S1-like spans 1–72 (MAKDDVIEVE…TKGRITYRFI (72 aa)).

Belongs to the IF-1 family. In terms of assembly, component of the 30S ribosomal translation pre-initiation complex which assembles on the 30S ribosome in the order IF-2 and IF-3, IF-1 and N-formylmethionyl-tRNA(fMet); mRNA recruitment can occur at any time during PIC assembly.

The protein resides in the cytoplasm. One of the essential components for the initiation of protein synthesis. Stabilizes the binding of IF-2 and IF-3 on the 30S subunit to which N-formylmethionyl-tRNA(fMet) subsequently binds. Helps modulate mRNA selection, yielding the 30S pre-initiation complex (PIC). Upon addition of the 50S ribosomal subunit IF-1, IF-2 and IF-3 are released leaving the mature 70S translation initiation complex. The sequence is that of Translation initiation factor IF-1 from Lactobacillus acidophilus (strain ATCC 700396 / NCK56 / N2 / NCFM).